The chain runs to 582 residues: Protein alan shepard (582 aa).

Pro residues predominate over residues 1–12 (MHPRYSPAPPPQ). The segment at 1 to 73 (MHPRYSPAPP…AAPPTSRSAF (73 aa)) is disordered. Position 5 is a phosphotyrosine (tyrosine 5). Residues 13–24 (QQQQMGGPLHQQ) are compositionally biased toward low complexity. The segment covering 25 to 36 (QGGGGGGGGGIR) has biased composition (gly residues). A compositionally biased stretch (polar residues) spans 39 to 57 (SNAQQLPPQIPRSQNYSNG). Positions 58-72 (SSSSAAAAPPTSRSA) are enriched in low complexity. Tyrosine 125 and tyrosine 142 each carry phosphotyrosine. The segment at 164–225 (PATTTYGQRV…TVQNQNQQGG (62 aa)) is disordered. Positions 178–225 (SPSNTNSSSSSNTGSQSGTLSTSLSNTTNTNTNMGPNGTVQNQNQQGG) are enriched in low complexity. RRM domains follow at residues 231–304 (TNLY…MAKQ) and 310–389 (TNLY…FADG). The disordered stretch occupies residues 555 to 582 (PMTDSEQASTAASPDEAYTQYPHQAAPK).

Functionally, has a role in the perception of gravity. This is Protein alan shepard from Drosophila yakuba (Fruit fly).